The chain runs to 2531 residues: Highly reducing polyketide synthase gloL (2531 aa).

In terms of domain architecture, Ketosynthase family 3 (KS3) spans 15–435 (YEPLAIVGMG…GANAHVILDS (421 aa)). Residues Cys-187, His-322, and His-358 each act as for beta-ketoacyl synthase activity in the active site. Residues 449–525 (TNGLSVNGHS…GHSVNGHSKP (77 aa)) form a disordered region. The span at 453 to 503 (SVNGHSINGNSVNGHSVNGHSTNGHSINGNSVNGHSVNGNSVNGHSTNGHS) shows a compositional bias: low complexity. Residues 505–521 (NGHSANGNSINGHSVNG) show a composition bias toward polar residues. Residues 602 to 909 (MVFTGQGAQW…VTALERGKDC (308 aa)) are malonyl-CoA:ACP transacylase (MAT) domain. The tract at residues 971–1099 (HEILGSRTVE…GQIRSGTDNP (129 aa)) is N-terminal hotdog fold. Residues 971–1251 (HEILGSRTVE…GGQFSPIEED (281 aa)) are dehydratase (DH) domain. The PKS/mFAS DH domain maps to 971 to 1254 (HEILGSRTVE…FSPIEEDSSD (284 aa)). His-1003 serves as the catalytic Proton acceptor; for dehydratase activity. The interval 1109-1254 (DHPRSVPSPY…FSPIEEDSSD (146 aa)) is C-terminal hotdog fold. The active-site Proton donor; for dehydratase activity is the Asp-1169. Positions 1419–1597 (DFFTAAGHSK…FSGCDATVYD (179 aa)) are methyltransferase (CMet) domain. The tract at residues 1806 to 2114 (GLLQTLRWVP…KGSHIGKIVV (309 aa)) is enoyl reductase (ER) (ER) domain. Residues 2139–2312 (GYLLVGGLGG…ASVVDIGVMG (174 aa)) form a ketoreductase (KR) domain region. The region spanning 2413–2505 (MSSVETDSSI…ALGLLTIEGL (93 aa)) is the Carrier domain. The residue at position 2464 (Ser-2464) is an O-(pantetheine 4'-phosphoryl)serine.

It functions in the pathway mycotoxin biosynthesis. Functionally, highly reducing polyketide synthase; part of the gene cluster that mediates the biosynthesis of pneumocandins, lipohexapeptides of the echinocandin family that prevent fungal cell wall formation by non-competitive inhibition of beta-1,3-glucan synthase. The 10,12-dimethylmyristoyl side chain is synthesized by the reducing polyketide synthase gloL/GLPKS4. The thioesterase gloN/GLHYD exclusively interacts with gloL/GLPKS4 to maintain turnover of the polyketide side chain. The 10R,12S-dimethylmyristic acid is then transferred to the first thiolation domain of the nonribosomal peptide synthetase gloA/GLNRPS4 by the acyl-AMP ligase gloD/GLligase, followed by its acylation to L-ornithine to trigger elongation of the cyclic hexapeptide. L-ornithine, 4R-hydroxyl-L-proline (generated from L-proline by the dioxygenase gloF/GLOXY2), 3S-hydroxyl-L-homotyrosine (generated by gloG/GLHtyB, gloH/GLHtyA, gloI/GLHtyC, gloJ/GLHtyD and hydroxylated at C-3 by the dioxygenase gloM/GLOXY1), 3R-hydroxyl-L-glutamine (generated from L-glutamine probably by the dioxygenase gloE/GLOXY3) and 3S-hydroxyl-L-proline (generated from L-proline by the dioxygenase gloF/GLOXY2 to yield pneumocandin B0), or 3S-hydroxyl-4S-methyl-L-proline (generated from L-leucine by the dioxygenase gloC/GLOXY4 to yield pneumocandin A0) are sequentially added to the growing chain. The last C domain of gloA/GLNRPS4 is proposed to be responsible for cyclization by condensation to form the peptide bond between L-ornithine and 3S-hydroxyl-4S-methyl-L-proline (for pneumocandin A0) or 3S-hydroxyl-L-proline (for pneumocandin B0). Finally, the subsequent C-4 hydroxylation of 3S-hydroxyl-L-homotyrosine and L-ornithine dihydroxylation at C-4 and C-5 are performed by the cytochrome P450 monooxygenases gloP/GLP450-1 and gloO/GLP450-2, respectively. This chain is Highly reducing polyketide synthase gloL, found in Glarea lozoyensis (strain ATCC 20868 / MF5171).